The primary structure comprises 2215 residues: Unconventional myosin-VIIa (2215 aa).

A Myosin motor domain is found at histidine 65–aspartate 741. Glycine 158–threonine 165 provides a ligand contact to ATP. The interval phenylalanine 632–asparagine 639 is actin-binding. 5 consecutive IQ domains span residues threonine 745–leucine 765, lysine 768–glycine 788, arginine 791–arginine 811, arginine 814–arginine 834, and leucine 837–glutamine 857. The segment at arginine 858–glutamate 935 is SAH. A MyTH4 1 domain is found at tyrosine 1017–lysine 1253. An FERM 1 domain is found at isoleucine 1258–arginine 1602. Residue serine 1569 is modified to Phosphoserine. The residue at position 1571 (threonine 1571) is a Phosphothreonine. In terms of domain architecture, SH3 spans lysine 1603–threonine 1672. A MyTH4 2 domain is found at histidine 1747–glutamine 1896. The FERM 2 domain occupies isoleucine 1902–methionine 2205.

The protein belongs to the TRAFAC class myosin-kinesin ATPase superfamily. Myosin family. As to quaternary structure, might homodimerize in a two headed molecule through the formation of a coiled-coil rod. Identified in a complex with USH1C and USH1G. Interacts with MYRIP. Interacts with RPE65. Interacts with CIB2. May interact with CALM. Interacts with WHRN. Interacts with PLEKHB1 (via PH domain). Interacts with PCDH15. Interacts with TWF2. Interacts with USH1G. Interacts with MYH9. Interacts (via MyTH4-FERM domains) with cytoplasmic regions of ADGRV1 and USH2A. Interacts with PDZD7 (via MyTH4-FERM domains). Interacts with CALML4. Expressed in the pigment epithelium and the photoreceptor cells of the retina. Also found in kidney, liver, testis, cochlea, lymphocytes. Not expressed in brain.

It is found in the cytoplasm. Its subcellular location is the cell cortex. The protein localises to the cytoskeleton. It localises to the synapse. With respect to regulation, ATP hydrolysis is inhibited by Mg(2+), already at a concentration of 0.4 mM. Its function is as follows. Myosins are actin-based motor molecules with ATPase activity. Unconventional myosins serve in intracellular movements. Their highly divergent tails bind to membranous compartments, which are then moved relative to actin filaments. In the retina, plays an important role in the renewal of the outer photoreceptor disks. Plays an important role in the distribution and migration of retinal pigment epithelial (RPE) melanosomes and phagosomes, and in the regulation of opsin transport in retinal photoreceptors. In the inner ear, plays an important role in differentiation, morphogenesis and organization of cochlear hair cell bundles. Involved in hair-cell vesicle trafficking of aminoglycosides, which are known to induce ototoxicity. Motor protein that is a part of the functional network formed by USH1C, USH1G, CDH23 and MYO7A that mediates mechanotransduction in cochlear hair cells. Required for normal hearing. The chain is Unconventional myosin-VIIa from Homo sapiens (Human).